Consider the following 412-residue polypeptide: AA9 family lytic polysaccharide monooxygenase A (412 aa).

The signal sequence occupies residues 1-20 (MKTTTYSLLALAAASKLASA). His21 and His103 together coordinate Cu(2+). The cysteines at positions 63 and 186 are disulfide-linked. N-linked (GlcNAc...) asparagine glycosylation occurs at Asn151. His172 is a binding site for O2. Tyr183 contacts Cu(2+). N-linked (GlcNAc...) asparagine glycans are attached at residues Asn334 and Asn385. Residues 373–409 (GVAKMYERCGGINHTGPTTCESGSVCKKWNPYYYQCV) form the CBM1 domain.

The protein belongs to the polysaccharide monooxygenase AA9 family. Requires Cu(2+) as cofactor.

The protein localises to the secreted. It catalyses the reaction [(1-&gt;4)-beta-D-glucosyl]n+m + reduced acceptor + O2 = 4-dehydro-beta-D-glucosyl-[(1-&gt;4)-beta-D-glucosyl]n-1 + [(1-&gt;4)-beta-D-glucosyl]m + acceptor + H2O.. In terms of biological role, lytic polysaccharide monooxygenase (LPMO) that depolymerizes crystalline and amorphous polysaccharides via the oxidation of scissile alpha- or beta-(1-4)-glycosidic bonds, yielding C4 oxidation products. Catalysis by LPMOs requires the reduction of the active-site copper from Cu(II) to Cu(I) by a reducing agent and H(2)O(2) or O(2) as a cosubstrate. This is AA9 family lytic polysaccharide monooxygenase A (eglD) from Aspergillus niger (strain ATCC MYA-4892 / CBS 513.88 / FGSC A1513).